We begin with the raw amino-acid sequence, 772 residues long: Carnitine O-palmitoyltransferase 1, muscle isoform (772 aa).

Residues 1 to 47 lie on the Cytoplasmic side of the membrane; that stretch reads MAEAHQAVAFQFTVTPEGVDFRLSREALKHIYLSGINSWKKRLIRIK. The helical transmembrane segment at 48–73 threads the bilayer; that stretch reads NGILRGVYPGSPTSWLVVASATAGSS. The Mitochondrial intermembrane portion of the chain corresponds to 74 to 102; it reads YYNVDISMGLVNHIQRCLPERYGPYWTPQ. A helical transmembrane segment spans residues 103–122; sequence TRALLSMAVVSTGVWMIGIF. Over 123 to 772 the chain is Cytoplasmic; the sequence is FFRQTLKLLL…DLFQVPKTDS (650 aa). The Proton acceptor role is filled by H473. 555–567 contacts CoA; that stretch reads GKGLIKKCRTSPD. Residues Y589 and T602 each coordinate (R)-carnitine.

Belongs to the carnitine/choline acetyltransferase family.

Its subcellular location is the mitochondrion outer membrane. The catalysed reaction is (R)-carnitine + hexadecanoyl-CoA = O-hexadecanoyl-(R)-carnitine + CoA. The protein operates within lipid metabolism; fatty acid beta-oxidation. Functionally, catalyzes the transfer of the acyl group of long-chain fatty acid-CoA conjugates onto carnitine, an essential step for the mitochondrial uptake of long-chain fatty acids and their subsequent beta-oxidation in the mitochondrion. The chain is Carnitine O-palmitoyltransferase 1, muscle isoform (CPT1B) from Sus scrofa (Pig).